We begin with the raw amino-acid sequence, 323 residues long: Apolipoprotein E (323 aa).

The signal sequence occupies residues 1-18; that stretch reads MKVLWAALVVTLLAGCWA. 8 repeat units span residues 86-107, 108-129, 130-151, 152-173, 174-195, 196-217, 218-239, and 240-261. The interval 86 to 261 is 8 X 22 AA approximate tandem repeats; it reads ALMDETMKEV…HLEEMREQIQ (176 aa). Met-149 carries the post-translational modification Methionine sulfoxide. Ser-153 carries the phosphoserine modification. Residues 164–174 form an LDL and other lipoprotein receptors binding region; that stretch reads HMRKLRKRVLR. Residue 168 to 171 participates in heparin binding; the sequence is LRKR. The lipid-binding and lipoprotein association stretch occupies residues 216–296; the sequence is NAKVGALATQ…SWFEPLLEDM (81 aa). A heparin-binding site is contributed by 235–242; it reads GQQLRGQL. Positions 272-323 are homooligomerization; sequence DQIRQKAEAFQARLKSWFEPLLEDMQRQWDGLVEKVQAAVATIPTSKPVEEP. The segment at 284 to 296 is specificity for association with VLDL; the sequence is RLKSWFEPLLEDM.

It belongs to the apolipoprotein A1/A4/E family. Homotetramer. May interact with ABCA1; functionally associated with ABCA1 in the biogenesis of HDLs. May interact with APP/A4 amyloid-beta peptide; the interaction is extremely stable in vitro but its physiological significance is unclear. May interact with MAPT. May interact with MAP2. In the cerebrospinal fluid, interacts with secreted SORL1. Interacts with PMEL; this allows the loading of PMEL luminal fragment on ILVs to induce fibril nucleation. APOE exists as multiple glycosylated and sialylated glycoforms within cells and in plasma. The extent of glycosylation and sialylation are tissue and context specific. In terms of processing, glycated in plasma VLDL. Post-translationally, phosphorylated by FAM20C in the extracellular medium.

It is found in the secreted. Its subcellular location is the extracellular space. It localises to the extracellular matrix. The protein resides in the extracellular vesicle. The protein localises to the endosome. It is found in the multivesicular body. Its function is as follows. APOE is an apolipoprotein, a protein associating with lipid particles, that mainly functions in lipoprotein-mediated lipid transport between organs via the plasma and interstitial fluids. APOE is a core component of plasma lipoproteins and is involved in their production, conversion and clearance. Apolipoproteins are amphipathic molecules that interact both with lipids of the lipoprotein particle core and the aqueous environment of the plasma. As such, APOE associates with chylomicrons, chylomicron remnants, very low density lipoproteins (VLDL) and intermediate density lipoproteins (IDL) but shows a preferential binding to high-density lipoproteins (HDL). It also binds a wide range of cellular receptors including the LDL receptor/LDLR and the very low-density lipoprotein receptor/VLDLR that mediate the cellular uptake of the APOE-containing lipoprotein particles. Finally, APOE also has a heparin-binding activity and binds heparan-sulfate proteoglycans on the surface of cells, a property that supports the capture and the receptor-mediated uptake of APOE-containing lipoproteins by cells. This Canis lupus familiaris (Dog) protein is Apolipoprotein E (APOE).